The following is a 1499-amino-acid chain: Ring canal kelch homolog (1499 aa).

Residues 56-66 are compositionally biased toward polar residues; sequence LDESSQKQLPR. The disordered stretch occupies residues 56–75; that stretch reads LDESSQKQLPRSNGKEKTTG. The region spanning 100–166 is the BTB domain; that stretch reads CDVVLVAEGI…VYRAVVEVTE (67 aa). 6 Kelch repeats span residues 351-396, 397-443, 444-490, 492-539, 541-586, and 588-634; these read VLLV…VLGD, KVYA…VLNN, CIYA…VVNG, LYAV…VLDN, LYAV…AHNG, and LYVV…MIDK. Sec-637 is a non-standard amino acid (selenocysteine). Disordered stretches follow at residues 679-714, 750-786, 825-856, 984-1017, 1033-1085, 1107-1160, 1301-1321, and 1334-1499; these read AGQAAGFGNDDENSQAEGLNPEPANSNNSAPNGNNV, LQYAVLNQPQPGPSGLGPGQAHRSLGGERGAVGGGGG, AGYDVPRGRPAPSYYQNQPPTGPSANGRCPNL, NQSNSSSASSASPYGANGPATTSQPNPTKDSSSV, SMNN…GNGG, ASTS…PVDV, QVGRARSESPSRPPGSDPLRT, and ARSP…TASE. Residues 698-713 show a composition bias toward low complexity; it reads NPEPANSNNSAPNGNN. A compositionally biased stretch (gly residues) spans 776 to 786; it reads GERGAVGGGGG. Low complexity predominate over residues 986-1003; the sequence is SNSSSASSASPYGANGPA. A compositionally biased stretch (polar residues) spans 1004-1017; the sequence is TTSQPNPTKDSSSV. Residues 1040–1054 show a composition bias toward low complexity; the sequence is SSAAHGTASGSAPAA. The span at 1065 to 1085 shows a compositional bias: gly residues; that stretch reads ISGGASGGGAGGAGSSGGNGG. Residues 1107 to 1119 are compositionally biased toward low complexity; sequence ASTSTTLGGKSTG. Polar residues predominate over residues 1135-1147; sequence GPSDPTAGTSAPQ. Over residues 1348-1359 the composition is skewed to basic and acidic residues; sequence NREKPREVRRIT. Low complexity predominate over residues 1401 to 1410; sequence SSASSSSDSD. A compositionally biased stretch (polar residues) spans 1460 to 1471; the sequence is VGSSSNETSDSL.

The protein localises to the cytoplasm. It localises to the cytoskeleton. Its function is as follows. May play a role in organizing the actin cytoskeleton. This Anopheles stephensi (Indo-Pakistan malaria mosquito) protein is Ring canal kelch homolog.